The following is a 162-amino-acid chain: MFSAKARWIVAVVLRVAAAGAAAVAAVLMAMSHDEVIVYGMEVQAKFRYTPSLVFFVAANAAVSACSLVVLLVPSSTSKLAARLLLMADVVLGMVLAGAFAAAGAMAELGKNGNSHAGWIAICVQVPLFCDRVRSALVAGSATIVLYYLMLMYSIYTLPMFP.

Topologically, residues 1–7 (MFSAKAR) are cytoplasmic. The chain crosses the membrane as a helical span at residues 8 to 28 (WIVAVVLRVAAAGAAAVAAVL). The Extracellular portion of the chain corresponds to 29–52 (MAMSHDEVIVYGMEVQAKFRYTPS). The chain crosses the membrane as a helical span at residues 53–73 (LVFFVAANAAVSACSLVVLLV). Over 74–83 (PSSTSKLAAR) the chain is Cytoplasmic. A helical membrane pass occupies residues 84-104 (LLLMADVVLGMVLAGAFAAAG). Residues 105–135 (AMAELGKNGNSHAGWIAICVQVPLFCDRVRS) are Extracellular-facing. The helical transmembrane segment at 136–156 (ALVAGSATIVLYYLMLMYSIY) threads the bilayer. The Cytoplasmic portion of the chain corresponds to 157-162 (TLPMFP).

The protein belongs to the Casparian strip membrane proteins (CASP) family. Homodimer and heterodimers.

The protein localises to the cell membrane. The polypeptide is CASP-like protein 1C1 (Oryza sativa subsp. japonica (Rice)).